The sequence spans 178 residues: MNKKTQALIEQYSKSLVEVAIEHKIVEKIQQEVAALIDIFETSELEGVLSSLAVSHDEKQHFVKTLQTSCSTYLVNFLEVIVQNEREALLYPILKSVDQELIKVNGQYPIQITTAVALSPEQKERLFDIAKTKLALPNGQLVEHIDPSIVGGFVVNANNKVIDASVRNQLHQFKMKLK.

Belongs to the ATPase delta chain family. In terms of assembly, F-type ATPases have 2 components, F(1) - the catalytic core - and F(0) - the membrane proton channel. F(1) has five subunits: alpha(3), beta(3), gamma(1), delta(1), epsilon(1). F(0) has three main subunits: a(1), b(2) and c(10-14). The alpha and beta chains form an alternating ring which encloses part of the gamma chain. F(1) is attached to F(0) by a central stalk formed by the gamma and epsilon chains, while a peripheral stalk is formed by the delta and b chains.

The protein resides in the cell membrane. In terms of biological role, f(1)F(0) ATP synthase produces ATP from ADP in the presence of a proton or sodium gradient. F-type ATPases consist of two structural domains, F(1) containing the extramembraneous catalytic core and F(0) containing the membrane proton channel, linked together by a central stalk and a peripheral stalk. During catalysis, ATP synthesis in the catalytic domain of F(1) is coupled via a rotary mechanism of the central stalk subunits to proton translocation. This protein is part of the stalk that links CF(0) to CF(1). It either transmits conformational changes from CF(0) to CF(1) or is implicated in proton conduction. This chain is ATP synthase subunit delta, found in Streptococcus agalactiae serotype V (strain ATCC BAA-611 / 2603 V/R).